We begin with the raw amino-acid sequence, 227 residues long: PKHD-type hydroxylase ACIAD0531 (227 aa).

One can recognise a Fe2OG dioxygenase domain in the interval 78–178; it reads HIIPPLFNRY…RFASFFWVQS (101 aa). Residues histidine 96, aspartate 98, and histidine 159 each contribute to the Fe cation site. Arginine 169 is a binding site for 2-oxoglutarate.

The cofactor is Fe(2+). L-ascorbate is required as a cofactor.

This Acinetobacter baylyi (strain ATCC 33305 / BD413 / ADP1) protein is PKHD-type hydroxylase ACIAD0531.